The primary structure comprises 195 residues: Thymidine kinase (195 aa).

Residues 15-22 (GSMFSGKS) and 88-91 (DEVQ) contribute to the ATP site. Glu-89 functions as the Proton acceptor in the catalytic mechanism. Phe-120 is a substrate binding site. 2 residues coordinate Zn(2+): Cys-145 and Cys-148. Substrate contacts are provided by residues 170-174 (IILVG) and Tyr-179. The Zn(2+) site is built by Cys-183 and Cys-186.

The protein belongs to the thymidine kinase family. In terms of assembly, homotetramer.

Its subcellular location is the cytoplasm. The catalysed reaction is thymidine + ATP = dTMP + ADP + H(+). The protein is Thymidine kinase of Bacillus cereus (strain ATCC 14579 / DSM 31 / CCUG 7414 / JCM 2152 / NBRC 15305 / NCIMB 9373 / NCTC 2599 / NRRL B-3711).